The primary structure comprises 1004 residues: BLOC-2 complex member HPS3 (1004 aa).

Positions 172 to 176 match the Clathrin-binding motif; sequence LLDFE.

As to quaternary structure, component of the biogenesis of lysosome-related organelles complex-2 (or BLOC2) composed of HPS3, HPS5 and HPS6. Interacts with HPS5. Interacts with HPS6. In terms of tissue distribution, widely expressed. Higher levels of expression are observed in kidney, liver and placenta.

The protein localises to the cytoplasm. It localises to the cytosol. In terms of biological role, involved in early stages of melanosome biogenesis and maturation. This is BLOC-2 complex member HPS3 (HPS3) from Homo sapiens (Human).